Here is a 147-residue protein sequence, read N- to C-terminus: uncharacterized protein (147 aa).

Positions 2–63 (LDELDKKIIG…KLNYENIGYD (62 aa)) constitute an HTH asnC-type domain. A DNA-binding region (H-T-H motif) is located at residues 21–40 (YREIAKELNVAVGTIYNRIK).

This is an uncharacterized protein from Pyrococcus abyssi (strain GE5 / Orsay).